The primary structure comprises 719 residues: Ferric reductase transmembrane component 4 (719 aa).

Positions 1–18 (MLLVHIISFLLFFQLSAA) are cleaved as a signal peptide. The Extracellular portion of the chain corresponds to 19–156 (KAPPSKTSLI…YGYYYNHDIP (138 aa)). Asn51, Asn80, Asn101, Asn113, Asn127, and Asn135 each carry an N-linked (GlcNAc...) asparagine glycan. Residues 157 to 177 (YYFGGIICAYFVGVMLLAGLI) traverse the membrane as a helical segment. At 178–228 (RFLNYTPIKKIMFQQKLVNYVRGYTTLPTLYEKHAEPFSYLKVITGYLPTR) the chain is on the cytoplasmic side. A helical membrane pass occupies residues 229-249 (FETLVILGYLILHTIFMAYKY). Over 250 to 267 (QYDPYHIIFAAHRAEVAH) the chain is Extracellular. The helical transmembrane segment at 268–288 (FVAYRSGILSFAHLPLIVLFA) threads the bilayer. A Ferric oxidoreductase domain is found at 273 to 407 (SGILSFAHLP…SGIEWIYAAI (135 aa)). Topologically, residues 289 to 304 (GRNNFLQLISGLKHTS) are cytoplasmic. Residues 305–325 (FIVFHKWLGRMMFLDAIIHAA) traverse the membrane as a helical segment. Residues His309 and His323 each contribute to the heme site. Residues 326–346 (GFTNYYLYYKKWNTVRLRVYW) lie on the Extracellular side of the membrane. The chain crosses the membrane as a helical span at residues 347-367 (KFGIATTCLAGMLIFFSIAAF). Over 368–373 (RRHYYE) the chain is Cytoplasmic. The chain crosses the membrane as a helical span at residues 374–394 (TFMALHIVFAALFLYTCWEHV). The heme site is built by His379 and His393. A topological domain (extracellular) is located at residue Thr395. Residues 396-416 (NFSGIEWIYAAIAIWGVDRIV) traverse the membrane as a helical segment. The 120-residue stretch at 408-527 (AIWGVDRIVR…EGPYGSKSTA (120 aa)) folds into the FAD-binding FR-type domain. Over 417-719 (RITRIALLGF…IEYLEEYQAW (303 aa)) the chain is Cytoplasmic. An FAD-binding site is contributed by 472 to 478 (HPFTVMD). Position 519–522 (519–522 (GPYG)) interacts with NADP(+). Composition is skewed to polar residues over residues 606-618 (EKIS…NGET) and 625-643 (SSLS…TELP). Residues 606–643 (EKISSNEVKNGETTAEKAPSSLSNSEKAPSESENTELP) form a disordered region. 685 to 686 (CG) contributes to the NADP(+) binding site.

Belongs to the ferric reductase (FRE) family. FAD serves as cofactor.

The protein resides in the cell membrane. The enzyme catalyses 2 a Fe(II)-siderophore + NADP(+) + H(+) = 2 a Fe(III)-siderophore + NADPH. Functionally, siderophore-iron reductase responsible for reducing extracellular iron prior to import. Catalyzes the reductive uptake of Fe(3+) bound to dihydroxamate rhodotorulic acid. Fe(3+) is reduced to Fe(2+), which then dissociates from the siderophore and can be imported by the high-affinity Fe(2+) transport complex in the plasma membrane. The sequence is that of Ferric reductase transmembrane component 4 (FRE4) from Saccharomyces cerevisiae (strain ATCC 204508 / S288c) (Baker's yeast).